A 602-amino-acid chain; its full sequence is UvrABC system protein C (602 aa).

One can recognise a GIY-YIG domain in the interval 17–94 (KTSGCYKMYS…IKKYKPTYNI (78 aa)). The UVR domain occupies 199–234 (SKLLNDIEIKMKEVIMKENFEAAIKLKETKKSLIEI).

Belongs to the UvrC family. As to quaternary structure, interacts with UvrB in an incision complex.

Its subcellular location is the cytoplasm. In terms of biological role, the UvrABC repair system catalyzes the recognition and processing of DNA lesions. UvrC both incises the 5' and 3' sides of the lesion. The N-terminal half is responsible for the 3' incision and the C-terminal half is responsible for the 5' incision. In Borrelia recurrentis (strain A1), this protein is UvrABC system protein C.